The following is a 445-amino-acid chain: Tubulin alpha-3 chain (445 aa).

8 residues coordinate GTP: glutamine 11, glutamate 72, serine 141, glycine 145, threonine 146, threonine 180, asparagine 207, and asparagine 229. Glutamate 72 serves as a coordination point for Mg(2+). Glutamate 255 is an active-site residue.

This sequence belongs to the tubulin family. In terms of assembly, dimer of alpha and beta chains. A typical microtubule is a hollow water-filled tube with an outer diameter of 25 nm and an inner diameter of 15 nM. Alpha-beta heterodimers associate head-to-tail to form protofilaments running lengthwise along the microtubule wall with the beta-tubulin subunit facing the microtubule plus end conferring a structural polarity. Microtubules usually have 13 protofilaments but different protofilament numbers can be found in some organisms and specialized cells. Interacts with NUM1. Mg(2+) serves as cofactor.

The protein localises to the cytoplasm. Its subcellular location is the cytoskeleton. The enzyme catalyses GTP + H2O = GDP + phosphate + H(+). Its function is as follows. Tubulin is the major constituent of microtubules, a cylinder consisting of laterally associated linear protofilaments composed of alpha- and beta-tubulin heterodimers. Microtubules grow by the addition of GTP-tubulin dimers to the microtubule end, where a stabilizing cap forms. Below the cap, tubulin dimers are in GDP-bound state, owing to GTPase activity of alpha-tubulin. The protein is Tubulin alpha-3 chain (TUB3) of Saccharomyces cerevisiae (strain ATCC 204508 / S288c) (Baker's yeast).